The sequence spans 91 residues: Acylphosphatase (91 aa).

The 88-residue stretch at 3–90 (RVSMIVSGQV…CGYSIFTIRR (88 aa)) folds into the Acylphosphatase-like domain. Catalysis depends on residues R18 and N36.

It belongs to the acylphosphatase family.

It carries out the reaction an acyl phosphate + H2O = a carboxylate + phosphate + H(+). This Methanospirillum hungatei JF-1 (strain ATCC 27890 / DSM 864 / NBRC 100397 / JF-1) protein is Acylphosphatase (acyP).